Consider the following 711-residue polypeptide: DNA topoisomerase 3 (711 aa).

The Toprim domain maps to 2-135 (KSLILAEKPS…IRRLWISSVT (134 aa)). Mg(2+) is bound by residues glutamate 8 and aspartate 104. Residues 152 to 580 (YNDLYYAALA…EMKDFTKDVV (429 aa)) enclose the Topo IA-type catalytic domain. The interaction with DNA stretch occupies residues 186-191 (SLGRVQ). Residue tyrosine 305 is the O-(5'-phospho-DNA)-tyrosine intermediate of the active site. The interval 691–711 (MNKNEGLDNNPFKDALKNLNL) is disordered.

It belongs to the type IA topoisomerase family. Mg(2+) is required as a cofactor.

It carries out the reaction ATP-independent breakage of single-stranded DNA, followed by passage and rejoining.. Functionally, releases the supercoiling and torsional tension of DNA, which is introduced during the DNA replication and transcription, by transiently cleaving and rejoining one strand of the DNA duplex. Introduces a single-strand break via transesterification at a target site in duplex DNA. The scissile phosphodiester is attacked by the catalytic tyrosine of the enzyme, resulting in the formation of a DNA-(5'-phosphotyrosyl)-enzyme intermediate and the expulsion of a 3'-OH DNA strand. The free DNA strand then undergoes passage around the unbroken strand, thus removing DNA supercoils. Finally, in the religation step, the DNA 3'-OH attacks the covalent intermediate to expel the active-site tyrosine and restore the DNA phosphodiester backbone. This is DNA topoisomerase 3 from Staphylococcus aureus (strain NCTC 8325 / PS 47).